A 165-amino-acid polypeptide reads, in one-letter code: MESDPMFIGFGYDRHPLVEGRRLVLAGVEIDAPLGSLGHSDGDVLSHAIIDALLGAGCLGDIGTWFPETKEYKDANSLDLLKETVKILEERGFSVVNVDATVVASIVKLSPYREKIVENLKSALETSRVNVKFKSGNTLGFEGEERGISAYAVCLVEEKGCTKST.

Residues aspartate 13 and histidine 15 each contribute to the a divalent metal cation site. Residues 13–15 and 39–40 contribute to the 4-CDP-2-C-methyl-D-erythritol 2-phosphate site; these read DRH and HS. Histidine 47 is an a divalent metal cation binding site. Residues 61-63 and phenylalanine 141 contribute to the 4-CDP-2-C-methyl-D-erythritol 2-phosphate site; that span reads DIG.

Belongs to the IspF family. In terms of assembly, homotrimer. Requires a divalent metal cation as cofactor.

It carries out the reaction 4-CDP-2-C-methyl-D-erythritol 2-phosphate = 2-C-methyl-D-erythritol 2,4-cyclic diphosphate + CMP. Its pathway is isoprenoid biosynthesis; isopentenyl diphosphate biosynthesis via DXP pathway; isopentenyl diphosphate from 1-deoxy-D-xylulose 5-phosphate: step 4/6. In terms of biological role, involved in the biosynthesis of isopentenyl diphosphate (IPP) and dimethylallyl diphosphate (DMAPP), two major building blocks of isoprenoid compounds. Catalyzes the conversion of 4-diphosphocytidyl-2-C-methyl-D-erythritol 2-phosphate (CDP-ME2P) to 2-C-methyl-D-erythritol 2,4-cyclodiphosphate (ME-CPP) with a corresponding release of cytidine 5-monophosphate (CMP). The polypeptide is 2-C-methyl-D-erythritol 2,4-cyclodiphosphate synthase (Thermotoga maritima (strain ATCC 43589 / DSM 3109 / JCM 10099 / NBRC 100826 / MSB8)).